The sequence spans 249 residues: Caffeoyl-CoA O-methyltransferase 1 (249 aa).

A substrate-binding site is contributed by Lys23. S-adenosyl-L-methionine is bound by residues Thr65, Glu87, 89 to 90 (GV), Ser95, Asp113, and Ala142. A substrate-binding site is contributed by Asp165. Asp165 contributes to the a divalent metal cation binding site. Residue Asp167 participates in S-adenosyl-L-methionine binding. 2 residues coordinate a divalent metal cation: Asp191 and Asn192. Residue Asn196 coordinates substrate.

It belongs to the class I-like SAM-binding methyltransferase superfamily. Cation-dependent O-methyltransferase family. CCoAMT subfamily. The cofactor is a divalent metal cation. Mostly expressed in petal limbs and tubes, and, at low levels, in flower buds, stamens, pistils, stems, roots and leaves.

Its subcellular location is the cytoplasm. It localises to the cytosol. It catalyses the reaction (E)-caffeoyl-CoA + S-adenosyl-L-methionine = (E)-feruloyl-CoA + S-adenosyl-L-homocysteine + H(+). It carries out the reaction (E)-5-hydroxyferuloyl-CoA + S-adenosyl-L-methionine = (E)-sinapoyl-CoA + S-adenosyl-L-homocysteine + H(+). It functions in the pathway aromatic compound metabolism; phenylpropanoid biosynthesis. Its function is as follows. Involved in the production of floral volatile phenylpropanoids in flowers of fragrant cultivars (e.g. cv. Mitchell and cv. V26) from cinnamic acid, a common precursor with the anthocyanin biosynthesis pathway involved in flower pigmentation. Methylates caffeoyl-CoA to feruloyl-CoA, also able to methylate 5-hydroxyferuloyl-CoA. The protein is Caffeoyl-CoA O-methyltransferase 1 of Petunia hybrida (Petunia).